Reading from the N-terminus, the 648-residue chain is Centrosomal protein of 63 kDa-B (648 aa).

Coiled coils occupy residues 19–188 and 222–555; these read DSCE…QSHN and EEEL…DAAS. Residue S559 is modified to Phosphoserine; by atm and atr. Positions 611 to 644 form a coiled coil; that stretch reads FLQEEEQRSHELLQRLNAHIEELKQESQRTVEHF.

It belongs to the CEP63 family. Phosphorylation at Ser-559 by atm and atr promotes its delocalization from the centrosome and impairs its ability to promote centrosome dependent spindle assembly.

Its subcellular location is the cytoplasm. The protein localises to the cytoskeleton. It is found in the microtubule organizing center. The protein resides in the centrosome. It localises to the centriole. In terms of biological role, required for normal spindle assembly. Plays a key role in mother-centriole-dependent centriole duplication. Plays a role in DNA damage response. Following DNA damage, such as double-strand breaks (DSBs), is removed from centrosomes; this leads to the inactivation of spindle assembly and delay in mitotic progression. The protein is Centrosomal protein of 63 kDa-B (cep63-b) of Xenopus laevis (African clawed frog).